The primary structure comprises 389 residues: Chalcone synthase (389 aa).

Residue Cys-164 is part of the active site.

This sequence belongs to the thiolase-like superfamily. Chalcone/stilbene synthases family.

It catalyses the reaction (E)-4-coumaroyl-CoA + 3 malonyl-CoA + 3 H(+) = 2',4,4',6'-tetrahydroxychalcone + 3 CO2 + 4 CoA. The protein operates within secondary metabolite biosynthesis; flavonoid biosynthesis. The primary product of this enzyme is 4,2',4',6'-tetrahydroxychalcone (also termed naringenin-chalcone or chalcone) which can under specific conditions spontaneously isomerize into naringenin. This chain is Chalcone synthase (CHS), found in Pueraria montana var. lobata (Kudzu vine).